A 351-amino-acid polypeptide reads, in one-letter code: MIESKGETAPSLNLNDVNVEENDAAQSFAEKVQRFRYQMKVHAAPRQKTLHSFLKKDNANIHDFTKVEKPHIRSSKSKVSYNSITSRVTKYFEEKNNSVDQLHSESLTPLSFGHTIPKKKPLLMTASVSEDSRVRVSKRQFKSKVVHPEIAISIAKRHKPKFPLSDELMNVEPGFHHSNIGCQITPYLWISSFRTNVYYLIGNEGDLLSQQVPSISGELNMLRGVCTRIDDDNRYDIEQAGSCFGMSVFPTSDSGEESFTTLESDPIVNCEHDEKKVADNLLVPQVMCSSNISTFFRSPGGKKLYHYLWKNSNALRISSNDLLEILLKHGVYVSLDTLHSWLQERNVNFEK.

This is an uncharacterized protein from Schizosaccharomyces pombe (strain 972 / ATCC 24843) (Fission yeast).